Reading from the N-terminus, the 126-residue chain is MSALDTSIRVEVKTEYIEQQSSPEDEKYLFSYTITIINLGEQAAKLETRHWIITDANGNTSEVQGAGVVGETPTIAPNTAYQYTSGTVLDTPLGIMHGTYGMVSESGEHFQATIRPFRLTTPGLLH.

Positions 2–126 (SALDTSIRVE…FRLTTPGLLH (125 aa)) constitute an ApaG domain.

The chain is Protein ApaG from Shewanella baltica (strain OS195).